A 410-amino-acid polypeptide reads, in one-letter code: Na(+)/H(+) antiporter NhaS4 (410 aa).

Transmembrane regions (helical) follow at residues 7–27 (LLIL…GLLF), 33–53 (PPVI…LGLL), 69–89 (FLYL…GLEL), 107–127 (VSIF…LYSL), 135–155 (FIPF…PVLA), 173–193 (LTCA…AIAV), 199–219 (IFGA…MVTL), 241–261 (LLTF…WIGI), 291–311 (FVST…TDLG), 319–339 (WAVC…GVYV), and 376–396 (GVIS…TTII).

Belongs to the monovalent cation:proton antiporter 2 (CPA2) transporter (TC 2.A.37) family.

The protein resides in the membrane. In terms of biological role, na(+)/H(+) antiporter. This is Na(+)/H(+) antiporter NhaS4 (nhaS4) from Synechocystis sp. (strain ATCC 27184 / PCC 6803 / Kazusa).